Here is a 307-residue protein sequence, read N- to C-terminus: tRNA dimethylallyltransferase (307 aa).

9-16 (GPTAVGKT) contributes to the ATP binding site. Residue 11-16 (TAVGKT) coordinates substrate. The interaction with substrate tRNA stretch occupies residues 34–37 (DSMQ).

Belongs to the IPP transferase family. Monomer. Mg(2+) serves as cofactor.

It catalyses the reaction adenosine(37) in tRNA + dimethylallyl diphosphate = N(6)-dimethylallyladenosine(37) in tRNA + diphosphate. Its function is as follows. Catalyzes the transfer of a dimethylallyl group onto the adenine at position 37 in tRNAs that read codons beginning with uridine, leading to the formation of N6-(dimethylallyl)adenosine (i(6)A). The protein is tRNA dimethylallyltransferase of Limosilactobacillus fermentum (strain NBRC 3956 / LMG 18251) (Lactobacillus fermentum).